We begin with the raw amino-acid sequence, 662 residues long: Serine/threonine kinase-like domain-containing protein STKLD1 (662 aa).

The 202-residue stretch at 1-202 (MLNPGALGVN…ILDMATCSFL (202 aa)) folds into the Protein kinase domain. ATP contacts are provided by residues 2–10 (LNPGALGVN) and Lys-25. The segment at 639–662 (LQEDQLEPPAGQEAPLQGEPLFRP) is disordered.

It belongs to the protein kinase superfamily. Ser/Thr protein kinase family. STKL subfamily.

The sequence is that of Serine/threonine kinase-like domain-containing protein STKLD1 (Stkld1) from Mus musculus (Mouse).